We begin with the raw amino-acid sequence, 443 residues long: Tol-Pal system protein TolB (443 aa).

A signal peptide spans 1–33 (MKIGIINTKIRTVFSAFACMIAASLVCTMPARA).

The protein belongs to the TolB family. The Tol-Pal system is composed of five core proteins: the inner membrane proteins TolA, TolQ and TolR, the periplasmic protein TolB and the outer membrane protein Pal. They form a network linking the inner and outer membranes and the peptidoglycan layer.

It is found in the periplasm. Functionally, part of the Tol-Pal system, which plays a role in outer membrane invagination during cell division and is important for maintaining outer membrane integrity. The polypeptide is Tol-Pal system protein TolB (Brucella canis (strain ATCC 23365 / NCTC 10854 / RM-666)).